A 364-amino-acid chain; its full sequence is UDP-N-acetylglucosamine--N-acetylmuramyl-(pentapeptide) pyrophosphoryl-undecaprenol N-acetylglucosamine transferase (364 aa).

UDP-N-acetyl-alpha-D-glucosamine-binding positions include 19–21, asparagine 131, arginine 167, serine 195, isoleucine 250, and glutamine 295; that span reads TGG.

It belongs to the glycosyltransferase 28 family. MurG subfamily.

The protein resides in the cell inner membrane. It catalyses the reaction di-trans,octa-cis-undecaprenyl diphospho-N-acetyl-alpha-D-muramoyl-L-alanyl-D-glutamyl-meso-2,6-diaminopimeloyl-D-alanyl-D-alanine + UDP-N-acetyl-alpha-D-glucosamine = di-trans,octa-cis-undecaprenyl diphospho-[N-acetyl-alpha-D-glucosaminyl-(1-&gt;4)]-N-acetyl-alpha-D-muramoyl-L-alanyl-D-glutamyl-meso-2,6-diaminopimeloyl-D-alanyl-D-alanine + UDP + H(+). It participates in cell wall biogenesis; peptidoglycan biosynthesis. Functionally, cell wall formation. Catalyzes the transfer of a GlcNAc subunit on undecaprenyl-pyrophosphoryl-MurNAc-pentapeptide (lipid intermediate I) to form undecaprenyl-pyrophosphoryl-MurNAc-(pentapeptide)GlcNAc (lipid intermediate II). This chain is UDP-N-acetylglucosamine--N-acetylmuramyl-(pentapeptide) pyrophosphoryl-undecaprenol N-acetylglucosamine transferase, found in Xylella fastidiosa (strain Temecula1 / ATCC 700964).